The primary structure comprises 206 residues: MTKSRAPKPPSDGTHPALGPLLTRWFFARSVHEVAPELIGATLLFGGAGGIIVEVEAYHHTDPAAHSYGGPTPRNQVMFGPPGFAYVYRSYGIHWCVNVVCEPEGSASAVLIRALEPTHGLAAMRKRRGLDEPRSLCSGPGKLAQALGITIADNGLPLDAAPFAIHRRTTTPEIVAGPRIGITKAADYPWRFGLKDSRFLSKPFPR.

It belongs to the DNA glycosylase MPG family.

The polypeptide is Putative 3-methyladenine DNA glycosylase (Rhodopseudomonas palustris (strain ATCC BAA-98 / CGA009)).